A 92-amino-acid polypeptide reads, in one-letter code: Small ribosomal subunit protein uS19c (92 aa).

This sequence belongs to the universal ribosomal protein uS19 family.

It localises to the plastid. The protein resides in the chloroplast. Its function is as follows. Protein S19 forms a complex with S13 that binds strongly to the 16S ribosomal RNA. The protein is Small ribosomal subunit protein uS19c of Spirogyra maxima (Green alga).